The chain runs to 371 residues: Glutamate 5-kinase (371 aa).

K11 is an ATP binding site. Positions 52, 139, and 151 each coordinate substrate. ATP contacts are provided by residues 171-172 (TD) and 213-219 (TGGMATK). The 79-residue stretch at 278–356 (EGSLTLDEGA…AEIPRILGYE (79 aa)) folds into the PUA domain.

It belongs to the glutamate 5-kinase family.

It localises to the cytoplasm. The enzyme catalyses L-glutamate + ATP = L-glutamyl 5-phosphate + ADP. Its pathway is amino-acid biosynthesis; L-proline biosynthesis; L-glutamate 5-semialdehyde from L-glutamate: step 1/2. Catalyzes the transfer of a phosphate group to glutamate to form L-glutamate 5-phosphate. In Synechococcus sp. (strain JA-2-3B'a(2-13)) (Cyanobacteria bacterium Yellowstone B-Prime), this protein is Glutamate 5-kinase.